A 711-amino-acid polypeptide reads, in one-letter code: BCLAF1 and THRAP3 family member 3 (711 aa).

The segment covering 1–15 (MARSRSRSPRWKHRS) has biased composition (basic residues). 2 disordered regions span residues 1–42 (MARS…YRKD) and 48–67 (AWRMDSEKHGQSKPRIPSRG). Phosphoserine occurs at positions 15 and 17. Positions 48 to 57 (AWRMDSEKHG) are enriched in basic and acidic residues. Phosphoserine occurs at positions 78, 80, and 187. 2 disordered regions span residues 94-350 (KPHR…KDSI) and 371-404 (EKIKKEGDCRKESNSSSNQLDKSQKLPDVKPSPI). Composition is skewed to basic and acidic residues over residues 163 to 197 (FRFEGKWHEDELRHQRIQEEKYSQSTRRGSEDFET), 204 to 213 (RYPEDRDFRK), 220 to 242 (RPKDVERYESREPARNPKWKPEH), 296 to 311 (SDGRTQKYCKEEDRKY), 318 to 349 (LNRELDCFNTGRGRETQDGQVKEPFKPSKKDS), and 371 to 383 (EKIKKEGDCRKES). Lys400 is covalently cross-linked (Glycyl lysine isopeptide (Lys-Gly) (interchain with G-Cter in SUMO2)). A phosphoserine mark is found at Ser402 and Ser578.

The protein belongs to the BCLAF1/THRAP3 family.

Its subcellular location is the mitochondrion. The sequence is that of BCLAF1 and THRAP3 family member 3 from Homo sapiens (Human).